A 155-amino-acid chain; its full sequence is Nascent polypeptide-associated complex subunit beta (155 aa).

2 disordered regions span residues 1–35 (MDQA…SGAD) and 116–155 (LAES…SNVE). Over residues 20-30 (TPRRKVKKVHK) the composition is skewed to basic residues. Residues 33-98 (GADDKKLQAT…GEEKELTELV (66 aa)) form the NAC-A/B domain. Over residues 136–155 (DEEDDIPDLVEGENFESNVE) the composition is skewed to acidic residues.

This sequence belongs to the NAC-beta family. Part of the nascent polypeptide-associated complex (NAC), consisting of egd2 and egd1. NAC associates with ribosomes via egd1.

It is found in the cytoplasm. The protein resides in the nucleus. Component of the nascent polypeptide-associated complex (NAC), a dynamic component of the ribosomal exit tunnel, protecting the emerging polypeptides from interaction with other cytoplasmic proteins to ensure appropriate nascent protein targeting. The NAC complex also promotes mitochondrial protein import by enhancing productive ribosome interactions with the outer mitochondrial membrane and blocks the inappropriate interaction of ribosomes translating non-secretory nascent polypeptides with translocation sites in the membrane of the endoplasmic reticulum. EGD1 may act as a transcription factor that exert a negative effect on the expression of several genes that are transcribed by RNA polymerase II. The protein is Nascent polypeptide-associated complex subunit beta (egd1) of Aspergillus niger (strain ATCC MYA-4892 / CBS 513.88 / FGSC A1513).